The following is a 422-amino-acid chain: CinA-like protein (422 aa).

This sequence belongs to the CinA family.

This is CinA-like protein from Mycolicibacterium gilvum (strain PYR-GCK) (Mycobacterium gilvum (strain PYR-GCK)).